Reading from the N-terminus, the 182-residue chain is MSYVPALKKHYKDNIIKELVSEFQYKSIMQAPKIEKIIVSMGVGDAVKNKKLLDSAVYELSQITGQRAVKTKAKKAIAGFKIRQGQEIGAKVTLRGNIMYEFLYKLINLALPRVKDFRGVNGNAFDGNGNYSFGIAEQIIFSEIDYDKIERISGLNVTIVTTALNDREGKALLSKFGMPFSN.

Belongs to the universal ribosomal protein uL5 family. In terms of assembly, part of the 50S ribosomal subunit; part of the 5S rRNA/L5/L18/L25 subcomplex. Contacts the 5S rRNA and the P site tRNA. Forms a bridge to the 30S subunit in the 70S ribosome.

Functionally, this is one of the proteins that bind and probably mediate the attachment of the 5S RNA into the large ribosomal subunit, where it forms part of the central protuberance. In the 70S ribosome it contacts protein S13 of the 30S subunit (bridge B1b), connecting the 2 subunits; this bridge is implicated in subunit movement. Contacts the P site tRNA; the 5S rRNA and some of its associated proteins might help stabilize positioning of ribosome-bound tRNAs. The sequence is that of Large ribosomal subunit protein uL5 from Borrelia turicatae (strain 91E135).